Consider the following 544-residue polypeptide: Chaperonin GroEL (544 aa).

ATP contacts are provided by residues 30-33 (TLGP), Lys-51, 87-91 (DGTTT), Gly-415, 481-483 (DAL), and Asp-497.

Belongs to the chaperonin (HSP60) family. Forms a cylinder of 14 subunits composed of two heptameric rings stacked back-to-back. Interacts with the co-chaperonin GroES.

It localises to the cytoplasm. It catalyses the reaction ATP + H2O + a folded polypeptide = ADP + phosphate + an unfolded polypeptide.. Its function is as follows. Together with its co-chaperonin GroES, plays an essential role in assisting protein folding. The GroEL-GroES system forms a nano-cage that allows encapsulation of the non-native substrate proteins and provides a physical environment optimized to promote and accelerate protein folding. The chain is Chaperonin GroEL from Chlamydia muridarum (strain MoPn / Nigg).